A 676-amino-acid polypeptide reads, in one-letter code: Protein timeless (676 aa).

The interval 77-108 (VNTLQKLLNLWFEASLSESSEDNESNTSPPKK) is necessary for normal circadian rhythm. Disordered regions lie at residues 94–145 (ESSE…CDER) and 346–398 (PESI…LVKR). 2 stretches are compositionally biased toward low complexity: residues 101-129 (SNTS…SDNG) and 360-369 (QGKPQHQKPP). The Nuclear localization signal motif lies at 388–398 (KELRRKKLVKR).

Belongs to the timeless family. Forms a heterodimer with period (PER); the complex then translocates into the nucleus. In terms of processing, phosphorylated with a circadian rhythmicity.

It is found in the nucleus. The protein resides in the cytoplasm. Its subcellular location is the perinuclear region. Its function is as follows. Required for the production of circadian rhythms. The biological cycle depends on the rhythmic formation and nuclear localization of the TIM-PER complex. Light induces the degradation of TIM, which promotes elimination of PER. Nuclear activity of the heterodimer coordinatively regulates PER and TIM transcription through a negative feedback loop. Behaves as a negative element in circadian transcriptional loop. Does not appear to bind DNA, suggesting indirect transcriptional inhibition. The protein is Protein timeless (tim) of Drosophila hydei (Fruit fly).